The following is a 421-amino-acid chain: RNA exonuclease 4 (421 aa).

2 disordered regions span residues 1–51 (MAKA…ETKK) and 79–179 (ENQA…QPPK). Residues 11–24 (SPCSGSLGKTANTP) show a composition bias toward polar residues. The segment covering 25–36 (KQKRKQKQRKFW) has biased composition (basic residues). Composition is skewed to basic and acidic residues over residues 92–107 (PKKD…EESV), 140–149 (AAEKSDEVSK), and 161–170 (DTEHQGKKPQ). An Exonuclease domain is found at 234–385 (TVAMDCEMVG…QDAQAAMRLY (152 aa)).

This sequence belongs to the REXO4 family.

The protein resides in the nucleus. This is RNA exonuclease 4 (rexo4) from Xenopus laevis (African clawed frog).